We begin with the raw amino-acid sequence, 484 residues long: UDP-N-acetylmuramate--L-alanine ligase (484 aa).

127-133 (GTHGKTT) serves as a coordination point for ATP.

This sequence belongs to the MurCDEF family.

It localises to the cytoplasm. It carries out the reaction UDP-N-acetyl-alpha-D-muramate + L-alanine + ATP = UDP-N-acetyl-alpha-D-muramoyl-L-alanine + ADP + phosphate + H(+). The protein operates within cell wall biogenesis; peptidoglycan biosynthesis. In terms of biological role, cell wall formation. This chain is UDP-N-acetylmuramate--L-alanine ligase, found in Shewanella amazonensis (strain ATCC BAA-1098 / SB2B).